A 340-amino-acid chain; its full sequence is Tetraacyldisaccharide 4'-kinase (340 aa).

An ATP-binding site is contributed by 50 to 57; the sequence is HGGGAGKT.

It belongs to the LpxK family.

It catalyses the reaction a lipid A disaccharide + ATP = a lipid IVA + ADP + H(+). It functions in the pathway glycolipid biosynthesis; lipid IV(A) biosynthesis; lipid IV(A) from (3R)-3-hydroxytetradecanoyl-[acyl-carrier-protein] and UDP-N-acetyl-alpha-D-glucosamine: step 6/6. In terms of biological role, transfers the gamma-phosphate of ATP to the 4'-position of a tetraacyldisaccharide 1-phosphate intermediate (termed DS-1-P) to form tetraacyldisaccharide 1,4'-bis-phosphate (lipid IVA). This is Tetraacyldisaccharide 4'-kinase from Rhodopseudomonas palustris (strain BisA53).